The following is a 680-amino-acid chain: ATPase family AAA domain-containing protein FIGL1 (680 aa).

Disordered stretches follow at residues 214–234 (YGNS…NQDR), 250–275 (FGTK…GAPN), and 288–352 (VRQK…GGKT). The segment covering 295–308 (TESPSSCLSPQSDK) has biased composition (polar residues). Gly residues predominate over residues 313–323 (RGYGSRSGGLR). A compositionally biased stretch (polar residues) spans 336–346 (TNGNNVGNLTS). Residues Ala-406 and 446-451 (GTGKTM) each bind ATP.

The protein belongs to the AAA ATPase family. Mg(2+) serves as cofactor.

The protein localises to the nucleus. The enzyme catalyses ATP + H2O = ADP + phosphate + H(+). Its function is as follows. Involved in DNA double-strand break (DBS) repair via homologous recombination (HR). Limits class II meiotic crossover (CO) formation by regulating the invasion step of meiotic HR. May counteract DMC1 and RAD51-mediated inter-homolog strand invasion to limit CO formation. Functions independently of FANCM. The polypeptide is ATPase family AAA domain-containing protein FIGL1 (Arabidopsis thaliana (Mouse-ear cress)).